Consider the following 522-residue polypeptide: 3-octaprenyl-4-hydroxybenzoate carboxy-lyase (522 aa).

Asn-181 is a Mn(2+) binding site. Prenylated FMN contacts are provided by residues Ile-184 to Arg-186, Arg-198 to Leu-200, and Arg-203 to Gly-204. Residue Glu-247 participates in Mn(2+) binding. The active-site Proton donor is the Asp-322.

Belongs to the UbiD family. In terms of assembly, homohexamer. It depends on prenylated FMN as a cofactor. Mn(2+) is required as a cofactor.

The protein localises to the cell membrane. It carries out the reaction a 4-hydroxy-3-(all-trans-polyprenyl)benzoate + H(+) = a 2-(all-trans-polyprenyl)phenol + CO2. It functions in the pathway cofactor biosynthesis; ubiquinone biosynthesis. Its function is as follows. Catalyzes the decarboxylation of 3-octaprenyl-4-hydroxy benzoate to 2-octaprenylphenol, an intermediate step in ubiquinone biosynthesis. This chain is 3-octaprenyl-4-hydroxybenzoate carboxy-lyase, found in Paraburkholderia xenovorans (strain LB400).